The following is a 136-amino-acid chain: ATP synthase F(0) complex subunit C1, mitochondrial (136 aa).

A mitochondrion-targeting transit peptide spans 1–61; sequence MQTTGALLIS…REFQTSVVSR (61 aa). A helical transmembrane segment spans residues 77–97; the sequence is VGVAGSGAGIGTVFGSLIIGY. Position 104 is an N6,N6,N6-trimethyllysine (Lys104). Residues 112 to 132 traverse the membrane as a helical segment; that stretch reads ILGFALFEAMGLFCLMVAFLI.

The protein belongs to the ATPase C chain family. Homooctamer; the c-ring consists of eight c subunits forming a circle, and each subunit adopts a hairpin shape. Component of the ATP synthase complex composed at least of ATP5F1A/subunit alpha, ATP5F1B/subunit beta, ATP5MC1/subunit c (homooctomer), MT-ATP6/subunit a, MT-ATP8/subunit 8, ATP5ME/subunit e, ATP5MF/subunit f, ATP5MG/subunit g, ATP5MK/subunit k, ATP5MJ/subunit j, ATP5F1C/subunit gamma, ATP5F1D/subunit delta, ATP5F1E/subunit epsilon, ATP5PF/subunit F6, ATP5PB/subunit b, ATP5PD/subunit d, ATP5PO/subunit OSCP. ATP synthase complex consists of a soluble F(1) head domain (subunits alpha(3) and beta(3)) - the catalytic core - and a membrane F(0) domain - the membrane proton channel (subunits c, a, 8, e, f, g, k and j). These two domains are linked by a central stalk (subunits gamma, delta, and epsilon) rotating inside the F1 region and a stationary peripheral stalk (subunits F6, b, d, and OSCP). Interacts with TMEM70 (homooligomer form); this interaction facilitates the oligomer formation of subunit c/ATP5MC1 (c-ring) and the c-ring membrane insertion and also protects ATP5MC1 against intramitochondrial proteolysis. In terms of processing, trimethylated by ATPSCKMT at Lys-104. Methylation is required for proper incorporation of the C subunit into the ATP synthase complex and mitochondrial respiration.

The protein localises to the mitochondrion membrane. It carries out the reaction H(+)(in) = H(+)(out). Its function is as follows. Subunit c, of the mitochondrial membrane ATP synthase complex (F(1)F(0) ATP synthase or Complex V) that produces ATP from ADP in the presence of a proton gradient across the membrane which is generated by electron transport complexes of the respiratory chain. ATP synthase complex consist of a soluble F(1) head domain - the catalytic core - and a membrane F(1) domain - the membrane proton channel. These two domains are linked by a central stalk rotating inside the F(1) region and a stationary peripheral stalk. During catalysis, ATP synthesis in the catalytic domain of F(1) is coupled via a rotary mechanism of the central stalk subunits to proton translocation. With the subunit a (MT-ATP6), forms the proton-conducting channel in the F(0) domain, that contains two crucial half-channels (inlet and outlet) that facilitate proton movement from the mitochondrial intermembrane space (IMS) into the matrix. Protons are taken up via the inlet half-channel and released through the outlet half-channel, following a Grotthuss mechanism. The sequence is that of ATP synthase F(0) complex subunit C1, mitochondrial from Sus scrofa (Pig).